Consider the following 346-residue polypeptide: Selenide, water dikinase (346 aa).

Residue Cys15 is part of the active site. Residues Lys18 and 46–48 each bind ATP; that span reads SKD. Asp49 is a Mg(2+) binding site. ATP-binding positions include Asp66, Asp89, and 137 to 139; that span reads GHS. Asp89 contributes to the Mg(2+) binding site. Mg(2+) is bound at residue Asp225.

It belongs to the selenophosphate synthase 1 family. Class I subfamily. Homodimer. Mg(2+) serves as cofactor.

The catalysed reaction is hydrogenselenide + ATP + H2O = selenophosphate + AMP + phosphate + 2 H(+). Functionally, synthesizes selenophosphate from selenide and ATP. This is Selenide, water dikinase from Photobacterium profundum (strain SS9).